The following is a 433-amino-acid chain: tRNA modification GTPase MnmE (433 aa).

Residues Arg24, Glu81, and Arg120 each coordinate (6S)-5-formyl-5,6,7,8-tetrahydrofolate. The TrmE-type G domain occupies 216–359 (GVEIVVLGAP…LLAALRARVE (144 aa)). Asn226 lines the K(+) pocket. GTP contacts are provided by residues 226-231 (NAGKST), 245-251 (SDIPGTT), 270-273 (DTAG), and 340-342 (SAR). Ser230 contacts Mg(2+). The K(+) site is built by Ser245, Ile247, and Thr250. Thr251 contacts Mg(2+). Residue Lys433 coordinates (6S)-5-formyl-5,6,7,8-tetrahydrofolate.

Belongs to the TRAFAC class TrmE-Era-EngA-EngB-Septin-like GTPase superfamily. TrmE GTPase family. In terms of assembly, homodimer. Heterotetramer of two MnmE and two MnmG subunits. Requires K(+) as cofactor.

Its subcellular location is the cytoplasm. Its function is as follows. Exhibits a very high intrinsic GTPase hydrolysis rate. Involved in the addition of a carboxymethylaminomethyl (cmnm) group at the wobble position (U34) of certain tRNAs, forming tRNA-cmnm(5)s(2)U34. The protein is tRNA modification GTPase MnmE of Acidiphilium cryptum (strain JF-5).